A 209-amino-acid polypeptide reads, in one-letter code: Octanoyltransferase (209 aa).

One can recognise a BPL/LPL catalytic domain in the interval 30–209 (DHEPEIIYLV…IQTEFNKIFK (180 aa)). Substrate contacts are provided by residues 69 to 76 (RGGKFTFH), 143 to 145 (AIG), and 156 to 158 (GVA). Cys174 (acyl-thioester intermediate) is an active-site residue.

It belongs to the LipB family.

Its subcellular location is the cytoplasm. The catalysed reaction is octanoyl-[ACP] + L-lysyl-[protein] = N(6)-octanoyl-L-lysyl-[protein] + holo-[ACP] + H(+). It participates in protein modification; protein lipoylation via endogenous pathway; protein N(6)-(lipoyl)lysine from octanoyl-[acyl-carrier-protein]: step 1/2. Functionally, catalyzes the transfer of endogenously produced octanoic acid from octanoyl-acyl-carrier-protein onto the lipoyl domains of lipoate-dependent enzymes. Lipoyl-ACP can also act as a substrate although octanoyl-ACP is likely to be the physiological substrate. This chain is Octanoyltransferase, found in Rickettsia rickettsii (strain Iowa).